The following is a 506-amino-acid chain: RNA2 polyprotein (506 aa).

This sequence belongs to the nepoviruses RNA2 polyprotein family. Post-translationally, specific enzymatic cleavages in vivo by the P1 encoded 3C-like protease yield mature proteins.

The protein resides in the host cell junction. The protein localises to the host plasmodesma. It localises to the virion. The movement protein is assembled into tubules that allow the transport of virions from cell to cell. In Beta vulgaris subsp. vulgaris (Beet), this protein is RNA2 polyprotein.